Reading from the N-terminus, the 145-residue chain is Ribosomal protein uL24-like (145 aa).

Disordered stretches follow at residues 1-21 (MKFN…HFNA) and 122-145 (KAKS…KMQE). Glycyl lysine isopeptide (Lys-Gly) (interchain with G-Cter in SUMO2) cross-links involve residues Lys-136 and Lys-142.

This sequence belongs to the universal ribosomal protein uL24 family.

The sequence is that of Ribosomal protein uL24-like (RPL26L1) from Homo sapiens (Human).